Reading from the N-terminus, the 348-residue chain is 2-heptyl-4(1H)-quinolone synthase subunit PqsC (348 aa).

Cysteine 129 acts as the Acyl-thioester intermediate in catalysis. Histidine 269 is an active-site residue.

It belongs to the thiolase-like superfamily. FabH family. As to quaternary structure, forms a tight complex with PqsB.

The protein resides in the cytoplasm. It carries out the reaction (2-aminobenzoyl)acetate + octanoyl-CoA + H(+) = 2-heptyl-4(1H)-quinolone + CO2 + CoA + H2O. Folding of PqsC and binding of octanoate are promoted by PqsB. Binding of the octanoyl group probably increases the binding affinity of the complex for 2-ABA. Activity of the complex is inhibited by 2-aminoacetophenone (2-AA). Functionally, required for the biosynthesis of the quorum-sensing signaling molecules 2-heptyl-4(1H)-quinolone (HHQ) and 2-heptyl-3-hydroxy-4(1H)-quinolone (Pseudomonas quinolone signal or PQS), which are important for biofilm formation and virulence. The PqsC/PqsB complex catalyzes the condensation of 2-aminobenzoylacetate (2-ABA) and octanoyl-CoA to form HHQ. First, PqsC acquires an octanoyl group from octanoyl-CoA and forms an octanoyl-PqsC intermediate. Then, together with PqsB, it catalyzes the coupling of 2-ABA with the octanoate group, leading to decarboxylation and dehydration, and resulting in closure of the quinoline ring. In Pseudomonas aeruginosa (strain ATCC 15692 / DSM 22644 / CIP 104116 / JCM 14847 / LMG 12228 / 1C / PRS 101 / PAO1), this protein is 2-heptyl-4(1H)-quinolone synthase subunit PqsC.